The following is a 499-amino-acid chain: Trichoplein keratin filament-binding protein (499 aa).

A coiled-coil region spans residues Ser12–His38. 2 disordered regions span residues Asp46–Gln78 and Val169–Asn209. A compositionally biased stretch (polar residues) spans Ser50–Ala67. Composition is skewed to basic and acidic residues over residues Gln69 to Gln78 and Gln172 to Asn209. Coiled coils occupy residues Asp71–Lys133, Gln168–Glu306, and Trp359–Gln484. The segment at Arg74–Thr499 is interaction with keratin proteins. Residues Lys260–Gln426 form a trichohyalin/plectin homology domain region.

The protein belongs to the TCHP family.

Its subcellular location is the cytoplasm. The protein resides in the cytoskeleton. The protein localises to the microtubule organizing center. It localises to the centrosome. Its function is as follows. May act as a 'capping' or 'branching' protein for keratin filaments in the cell periphery. May regulate K8/K18 filament and desmosome organization mainly at the apical or peripheral regions of simple epithelial cells. The polypeptide is Trichoplein keratin filament-binding protein (Danio rerio (Zebrafish)).